Consider the following 108-residue polypeptide: Transcription factor AmrZ (108 aa).

Functionally, functions both as a transcriptional activator and a repressor of multiple genes encoding virulence factors as well as genes involved in environmental adaptation. Represses genes involved in iron homeostasis. Modulates intracellular levels of c-di-GMP which in turn regulates swimming motility and biofilm formation. In Pseudomonas ogarae (strain DSM 112162 / CECT 30235 / F113), this protein is Transcription factor AmrZ.